A 355-amino-acid polypeptide reads, in one-letter code: MDYTLDLSVTTVTDYYYPDIFSSPCDAELIQTNGKLLLAVFYCLLFVFSLLGNSLVILVLVVCKKLRSITDVYLLNLALSDLLFVFSFPFQTYYLLDQWVFGTVMCKVVSGFYYIGFYSSMFFITLMSVDRYLAVVHAVYALKVRTIRMGTTLCLAVWLTAIMATIPLLVFYQVASEDGVLQCYSFYNQQTLKWKIFTNFKMNILGLLIPFTIFMFCYIKILHQLKRCQNHNKTKAIRLVLIVVIASLLFWVPFNVVLFLTSLHSMHILDGCSISQQLTYATHVTEIISFTHCCVNPVIYAFVGEKFKKHLSEIFQKSCSQIFNYLGRQMPRESCEKSSSCQQHSSRSSSVDYIL.

At 1-35 (MDYTLDLSVTTVTDYYYPDIFSSPCDAELIQTNGK) the chain is on the extracellular side. Residues 36–63 (LLLAVFYCLLFVFSLLGNSLVILVLVVC) form a helical membrane-spanning segment. The Cytoplasmic portion of the chain corresponds to 64-73 (KKLRSITDVY). A helical transmembrane segment spans residues 74-93 (LLNLALSDLLFVFSFPFQTY). The Extracellular segment spans residues 94-107 (YLLDQWVFGTVMCK). Residues Cys-106 and Cys-183 are joined by a disulfide bond. Residues 108 to 129 (VVSGFYYIGFYSSMFFITLMSV) form a helical membrane-spanning segment. Residues 130–146 (DRYLAVVHAVYALKVRT) lie on the Cytoplasmic side of the membrane. The chain crosses the membrane as a helical span at residues 147-171 (IRMGTTLCLAVWLTAIMATIPLLVF). Residues 172-202 (YQVASEDGVLQCYSFYNQQTLKWKIFTNFKM) lie on the Extracellular side of the membrane. The helical transmembrane segment at 203-222 (NILGLLIPFTIFMFCYIKIL) threads the bilayer. Over 223 to 238 (HQLKRCQNHNKTKAIR) the chain is Cytoplasmic. A helical transmembrane segment spans residues 239 to 263 (LVLIVVIASLLFWVPFNVVLFLTSL). The Extracellular segment spans residues 264–280 (HSMHILDGCSISQQLTY). Residues 281–304 (ATHVTEIISFTHCCVNPVIYAFVG) traverse the membrane as a helical segment. Residues 305-355 (EKFKKHLSEIFQKSCSQIFNYLGRQMPRESCEKSSSCQQHSSRSSSVDYIL) lie on the Cytoplasmic side of the membrane.

It belongs to the G-protein coupled receptor 1 family.

It localises to the cell membrane. In terms of biological role, receptor for the chemokine CCL1/SCYA1/I-309. May regulate monocyte chemotaxis and thymic cell line apoptosis. Alternative coreceptor with CD4 for HIV-1 infection. The sequence is that of C-C chemokine receptor type 8 (CCR8) from Homo sapiens (Human).